Here is a 127-residue protein sequence, read N- to C-terminus: uncharacterized protein (127 aa).

The first 23 residues, 1–23 (MSKPLKFLLWSSLALLLLQIGSG), serve as a signal peptide directing secretion.

This is an uncharacterized protein from Arabidopsis thaliana (Mouse-ear cress).